The sequence spans 275 residues: 3-methyl-2-oxobutanoate hydroxymethyltransferase (275 aa).

Aspartate 44 and aspartate 83 together coordinate Mg(2+). 3-methyl-2-oxobutanoate is bound by residues aspartate 44 to serine 45, aspartate 83, and lysine 113. Glutamate 115 contacts Mg(2+). The Proton acceptor role is filled by glutamate 182.

The protein belongs to the PanB family. As to quaternary structure, homodecamer; pentamer of dimers. Requires Mg(2+) as cofactor.

It localises to the cytoplasm. It carries out the reaction 3-methyl-2-oxobutanoate + (6R)-5,10-methylene-5,6,7,8-tetrahydrofolate + H2O = 2-dehydropantoate + (6S)-5,6,7,8-tetrahydrofolate. It functions in the pathway cofactor biosynthesis; (R)-pantothenate biosynthesis; (R)-pantoate from 3-methyl-2-oxobutanoate: step 1/2. Its function is as follows. Catalyzes the reversible reaction in which hydroxymethyl group from 5,10-methylenetetrahydrofolate is transferred onto alpha-ketoisovalerate to form ketopantoate. This chain is 3-methyl-2-oxobutanoate hydroxymethyltransferase, found in Clostridium beijerinckii (strain ATCC 51743 / NCIMB 8052) (Clostridium acetobutylicum).